We begin with the raw amino-acid sequence, 367 residues long: Alginate lyase (367 aa).

The N-terminal stretch at 1–24 is a signal peptide; it reads MTIFKRISSPALLALALFGGAAHA. Substrate contacts are provided by residues 63–64, 136–137, and Tyr254; these read SK and HT.

It belongs to the polysaccharide lyase 5 family.

Its subcellular location is the periplasm. The catalysed reaction is Eliminative cleavage of alginate to give oligosaccharides with 4-deoxy-alpha-L-erythro-hex-4-enuronosyl groups at their non-reducing ends and beta-D-mannuronate at their reducing end.. In terms of biological role, catalyzes the depolymerization of alginate by cleaving the beta-1,4 glycosidic bond between two adjacent sugar residues via a beta-elimination mechanism. May serve to degrade mislocalized alginate that is trapped in the periplasmic space. The polypeptide is Alginate lyase (Pseudomonas putida (strain ATCC 700007 / DSM 6899 / JCM 31910 / BCRC 17059 / LMG 24140 / F1)).